A 122-amino-acid chain; its full sequence is Serum amyloid A-3 protein (122 aa).

A signal peptide spans 1–18 (MKLSIGIIFCFLILGVNS). The tract at residues 88–122 (GRGAEDSKADQEANQWGRSGNDPNHFRPKGLPDKY) is disordered. Residues 99 to 109 (EANQWGRSGND) are compositionally biased toward polar residues.

This sequence belongs to the SAA family. Expressed by the liver; secreted in plasma. Expressed in synovial fibroblasts.

The protein resides in the secreted. Major acute phase reactant. Apolipoprotein of the HDL complex. In vitro exhibits antimicrobial activity against Escherichia coli, Streptococcus uberis and Pseudomonas aeruginosa. The polypeptide is Serum amyloid A-3 protein (SAA3) (Oryctolagus cuniculus (Rabbit)).